Consider the following 75-residue polypeptide: Exodeoxyribonuclease 7 small subunit (75 aa).

It belongs to the XseB family. In terms of assembly, heterooligomer composed of large and small subunits.

It localises to the cytoplasm. The catalysed reaction is Exonucleolytic cleavage in either 5'- to 3'- or 3'- to 5'-direction to yield nucleoside 5'-phosphates.. Functionally, bidirectionally degrades single-stranded DNA into large acid-insoluble oligonucleotides, which are then degraded further into small acid-soluble oligonucleotides. The sequence is that of Exodeoxyribonuclease 7 small subunit from Citrifermentans bemidjiense (strain ATCC BAA-1014 / DSM 16622 / JCM 12645 / Bem) (Geobacter bemidjiensis).